Reading from the N-terminus, the 77-residue chain is Large ribosomal subunit protein uL24 (77 aa).

The interval 42-61 (KKHQKPSQTNANGGVVESEG) is disordered.

It belongs to the universal ribosomal protein uL24 family. Part of the 50S ribosomal subunit.

Its function is as follows. One of two assembly initiator proteins, it binds directly to the 5'-end of the 23S rRNA, where it nucleates assembly of the 50S subunit. One of the proteins that surrounds the polypeptide exit tunnel on the outside of the subunit. The protein is Large ribosomal subunit protein uL24 of Lactobacillus acidophilus (strain ATCC 700396 / NCK56 / N2 / NCFM).